Here is a 181-residue protein sequence, read N- to C-terminus: Isopentenyl-diphosphate Delta-isomerase (181 aa).

Mn(2+)-binding residues include histidine 29 and histidine 36. Residues proline 34–glutamate 167 form the Nudix hydrolase domain. Cysteine 71 is a catalytic residue. Position 73 (histidine 73) interacts with Mn(2+). Mg(2+) is bound at residue glutamate 91. Glutamate 118 and glutamate 120 together coordinate Mn(2+). Glutamate 120 is a catalytic residue.

This sequence belongs to the IPP isomerase type 1 family. Mg(2+) is required as a cofactor. Mn(2+) serves as cofactor.

It localises to the cytoplasm. It catalyses the reaction isopentenyl diphosphate = dimethylallyl diphosphate. The protein operates within isoprenoid biosynthesis; dimethylallyl diphosphate biosynthesis; dimethylallyl diphosphate from isopentenyl diphosphate: step 1/1. Functionally, catalyzes the 1,3-allylic rearrangement of the homoallylic substrate isopentenyl (IPP) to its highly electrophilic allylic isomer, dimethylallyl diphosphate (DMAPP). This Mycolicibacterium vanbaalenii (strain DSM 7251 / JCM 13017 / BCRC 16820 / KCTC 9966 / NRRL B-24157 / PYR-1) (Mycobacterium vanbaalenii) protein is Isopentenyl-diphosphate Delta-isomerase.